We begin with the raw amino-acid sequence, 154 residues long: Aspartate carbamoyltransferase regulatory chain (154 aa).

Zn(2+) contacts are provided by C109, C114, C138, and C141.

It belongs to the PyrI family. Contains catalytic and regulatory chains. Zn(2+) serves as cofactor.

Functionally, involved in allosteric regulation of aspartate carbamoyltransferase. The polypeptide is Aspartate carbamoyltransferase regulatory chain (Photobacterium profundum (strain SS9)).